A 150-amino-acid chain; its full sequence is Monothiol glutaredoxin-5, mitochondrial (150 aa).

The N-terminal 29 residues, 1-29 (MFLPKFNPIRSFSPILRAKTLLRYQNRMY), are a transit peptide targeting the mitochondrion. In terms of domain architecture, Glutaredoxin spans 35–140 (RKAIEDAIES…DLLEEAQALV (106 aa)). Glutathione is bound at residue Lys52. Cys60 provides a ligand contact to [2Fe-2S] cluster. Residues 92 to 96 (REGIK), Ile104, and 117 to 118 (CD) each bind glutathione.

It belongs to the glutaredoxin family. Monothiol subfamily. In terms of assembly, homodimer. Interacts with SSQ1. Interacts with BOL1.

It is found in the mitochondrion matrix. Its function is as follows. Monothiol glutaredoxin involved in mitochondrial iron-sulfur (Fe/S) cluster transfer. Receives 2Fe/2S clusters from scaffold protein ISU1 and mediates their transfer to apoproteins, to the 4Fe/FS cluster biosynthesis machinery, or export from mitochondrion. In Saccharomyces cerevisiae (strain ATCC 204508 / S288c) (Baker's yeast), this protein is Monothiol glutaredoxin-5, mitochondrial.